The chain runs to 179 residues: Large ribosomal subunit protein uL6 (179 aa).

This sequence belongs to the universal ribosomal protein uL6 family. Part of the 50S ribosomal subunit.

Functionally, this protein binds to the 23S rRNA, and is important in its secondary structure. It is located near the subunit interface in the base of the L7/L12 stalk, and near the tRNA binding site of the peptidyltransferase center. The polypeptide is Large ribosomal subunit protein uL6 (Pseudomonas savastanoi pv. phaseolicola (strain 1448A / Race 6) (Pseudomonas syringae pv. phaseolicola (strain 1448A / Race 6))).